Consider the following 364-residue polypeptide: MAQQTPLYEQHTLCGARMVDFHGWMMPLHYGSQLDEHHAVRTDAGMFDVSHMTIVDLHGSRTREFLRYLLANDVAKLTKTGKALYSGMLNASGGVIDDLIVYYFTEDFFRLVVNSATREKDLSWITQHAEPYAIDITVRDDLSLIAVQGPNAQEKAATLFTEQQRHAVEGMKPFFGVQAGDLFIATTGYTGEAGYEIAMPNEKAADFWRALVEAGVKPCGLGARDTLRLEAGMNLYGQEMDEGISPLAANMGWTIAWEPADRDFIGREALEMQREKGHEQLVGLVMTEKGVLRNELPVRFTDAQGNQQEGIITSGTFSPTLGYSIALARVPAGIGETAIVQIRNREMPVKVTKPVFVRNGKAVA.

It belongs to the GcvT family. As to quaternary structure, the glycine cleavage system is composed of four proteins: P, T, L and H.

It catalyses the reaction N(6)-[(R)-S(8)-aminomethyldihydrolipoyl]-L-lysyl-[protein] + (6S)-5,6,7,8-tetrahydrofolate = N(6)-[(R)-dihydrolipoyl]-L-lysyl-[protein] + (6R)-5,10-methylene-5,6,7,8-tetrahydrofolate + NH4(+). Functionally, the glycine cleavage system catalyzes the degradation of glycine. The chain is Aminomethyltransferase from Salmonella paratyphi B (strain ATCC BAA-1250 / SPB7).